We begin with the raw amino-acid sequence, 92 residues long: Large ribosomal subunit protein eL31 (92 aa).

Ser-2 bears the N-acetylserine mark.

This sequence belongs to the eukaryotic ribosomal protein eL31 family. In terms of assembly, part of the 50S ribosomal subunit.

In terms of biological role, binds to the 23S rRNA. Located at the polypeptide exit tunnel on the outside of the subunit. The chain is Large ribosomal subunit protein eL31 (rpl31e) from Haloarcula marismortui (strain ATCC 43049 / DSM 3752 / JCM 8966 / VKM B-1809) (Halobacterium marismortui).